An 810-amino-acid polypeptide reads, in one-letter code: Coiled-coil domain-containing protein 15 (810 aa).

Coiled-coil stretches lie at residues 65-89 (VVEEEIKEQQRRKQESLRHFQRQVR), 160-189 (DGENQLFQQQAQALSQTMKQARHQLASFKT), and 638-669 (MDIEREQVKEQNRQRERKRRIEKIKKKKEQQR).

As to quaternary structure, interacts with POC5, POC1B, CETN2 and FAM161A.

The protein localises to the cytoplasm. It localises to the cytoskeleton. The protein resides in the microtubule organizing center. Its subcellular location is the centrosome. It is found in the centriole. The protein localises to the centriolar satellite. Plays an important role in primary cilium assembly, maintenance, and length regulation. Interacts with centriole inner scaffold proteins to promote proper centriole size and integrity and assembly of functional cilia. Required for the recruitment of both the inner scaffold protein POC1B and the distal SFI1/CETN2 complex to centrioles. This is Coiled-coil domain-containing protein 15 (Ccdc15) from Mus musculus (Mouse).